Consider the following 273-residue polypeptide: Formamidopyrimidine-DNA glycosylase (273 aa).

The active-site Schiff-base intermediate with DNA is Pro2. Glu3 acts as the Proton donor in catalysis. Lys58 serves as the catalytic Proton donor; for beta-elimination activity. Positions 91 and 110 each coordinate DNA. The FPG-type zinc finger occupies 238–272 (QVYGKTDQPCARCATPIEKIKVGGRGTHFCPSCQK). The active-site Proton donor; for delta-elimination activity is Arg262.

The protein belongs to the FPG family. In terms of assembly, monomer. Zn(2+) is required as a cofactor.

The catalysed reaction is Hydrolysis of DNA containing ring-opened 7-methylguanine residues, releasing 2,6-diamino-4-hydroxy-5-(N-methyl)formamidopyrimidine.. It carries out the reaction 2'-deoxyribonucleotide-(2'-deoxyribose 5'-phosphate)-2'-deoxyribonucleotide-DNA = a 3'-end 2'-deoxyribonucleotide-(2,3-dehydro-2,3-deoxyribose 5'-phosphate)-DNA + a 5'-end 5'-phospho-2'-deoxyribonucleoside-DNA + H(+). In terms of biological role, involved in base excision repair of DNA damaged by oxidation or by mutagenic agents. Acts as a DNA glycosylase that recognizes and removes damaged bases. Has a preference for oxidized purines, such as 7,8-dihydro-8-oxoguanine (8-oxoG). Has AP (apurinic/apyrimidinic) lyase activity and introduces nicks in the DNA strand. Cleaves the DNA backbone by beta-delta elimination to generate a single-strand break at the site of the removed base with both 3'- and 5'-phosphates. The chain is Formamidopyrimidine-DNA glycosylase (mutM) from Streptococcus mutans serotype c (strain ATCC 700610 / UA159).